The primary structure comprises 314 residues: Bifunctional riboflavin kinase/FMN adenylyltransferase (314 aa).

It belongs to the RibF family.

The catalysed reaction is riboflavin + ATP = FMN + ADP + H(+). It carries out the reaction FMN + ATP + H(+) = FAD + diphosphate. It functions in the pathway cofactor biosynthesis; FAD biosynthesis; FAD from FMN: step 1/1. It participates in cofactor biosynthesis; FMN biosynthesis; FMN from riboflavin (ATP route): step 1/1. Catalyzes the phosphorylation of riboflavin to FMN followed by the adenylation of FMN to FAD. Can also catalyze the phosphorylation of the toxic riboflavin analogs 8-demethyl-8-aminoriboflavin (AF) to 8-demethyl-8-aminoriboflavin mononucleotide (AFMN) and roseoflavin (RoF) to roseoflavin mononucleotide (RoFMN), and the adenylation of AFMN to 8-demethyl-8-aminoriboflavin adenine dinucleotide (AFAD). The chain is Bifunctional riboflavin kinase/FMN adenylyltransferase from Listeria monocytogenes serovar 1/2a (strain ATCC BAA-679 / EGD-e).